Reading from the N-terminus, the 312-residue chain is tRNA-cytidine(32) 2-sulfurtransferase (312 aa).

The PP-loop motif motif lies at 39 to 44; that stretch reads SGGKDS. 3 residues coordinate [4Fe-4S] cluster: Cys114, Cys117, and Cys205.

Belongs to the TtcA family. As to quaternary structure, homodimer. Mg(2+) is required as a cofactor. It depends on [4Fe-4S] cluster as a cofactor.

It is found in the cytoplasm. It catalyses the reaction cytidine(32) in tRNA + S-sulfanyl-L-cysteinyl-[cysteine desulfurase] + AH2 + ATP = 2-thiocytidine(32) in tRNA + L-cysteinyl-[cysteine desulfurase] + A + AMP + diphosphate + H(+). The protein operates within tRNA modification. Functionally, catalyzes the ATP-dependent 2-thiolation of cytidine in position 32 of tRNA, to form 2-thiocytidine (s(2)C32). The sulfur atoms are provided by the cysteine/cysteine desulfurase (IscS) system. In Ralstonia nicotianae (strain ATCC BAA-1114 / GMI1000) (Ralstonia solanacearum), this protein is tRNA-cytidine(32) 2-sulfurtransferase.